A 57-amino-acid polypeptide reads, in one-letter code: Mambaquaretin-5 (57 aa).

The BPTI/Kunitz inhibitor domain maps to 5-55 (CNLPVKPGPCSGFFSAFYYSQKTNKCHSFTYSGCRGNGNRFRTIEECRRTC). 3 cysteine pairs are disulfide-bonded: Cys-5–Cys-55, Cys-14–Cys-38, and Cys-30–Cys-51.

The protein belongs to the venom Kunitz-type family. Expressed by the venom gland.

It is found in the secreted. Interacts with vasopressin V2 receptor (V2R/AVPR2), probably in a selective manner. Inhibits vasopressin binding human V2R in the nanomolar range (Ki=3.50 nM), and also potently inhibits vasopressin-induced cAMP production (IC(50)=21 nM). In vivo, intraperitoneal injection of this protein into rats increases diuresis by 6-fold, without any loss of electrolytes. This Dendroaspis jamesoni kaimosae (Eastern Jameson's mamba) protein is Mambaquaretin-5.